An 85-amino-acid chain; its full sequence is UPF0181 protein YPTS_1774 (85 aa).

Residues 57-72 show a composition bias toward basic and acidic residues; that stretch reads DHDFDEHTESDYRRDD. A disordered region spans residues 57 to 85; it reads DHDFDEHTESDYRRDDEPDADDIEDLYEG. The span at 73-85 shows a compositional bias: acidic residues; that stretch reads EPDADDIEDLYEG.

This sequence belongs to the UPF0181 family.

The sequence is that of UPF0181 protein YPTS_1774 from Yersinia pseudotuberculosis serotype IB (strain PB1/+).